The chain runs to 320 residues: MAKYDYNPKYGLENYSIFLPFETSFDAFRSTTWMQNHWYQSITASVVYVAVIFTGKKIMEKYKPFQLDTPLFVWNSFLAIFSILGFLRMTPEFVWSWSAEGNSFKYSICHSSYAQGVTGFWTEQFAMSKLFELIDTIFIVLRKRPLIFLHWYHHVTVMIYTWHAYKDHTASGRWFIWMNYGVHALMYSYYALRSLKFRLPKQMAMVVTTLQLAQMVMGVIIGVTVYRIKSSGEYCQQTWDNLGLCFGVYFTYFLLFANFFYHAYVKKNNRYTEVKKDKKEKEEPVDFEILEPKEDINANIAEPSITTRSAAARRKVQKAD.

Residue asparagine 14 is glycosylated (N-linked (GlcNAc...) asparagine). 6 consecutive transmembrane segments (helical) span residues 33–53 (WMQN…AVIF), 67–87 (LDTP…LGFL), 120–140 (FWTE…IFIV), 145–165 (PLIF…WHAY), 203–223 (MAMV…IIGV), and 242–262 (LGLC…FFYH).

It belongs to the ELO family.

It localises to the membrane. The catalysed reaction is a very-long-chain acyl-CoA + malonyl-CoA + H(+) = a very-long-chain 3-oxoacyl-CoA + CO2 + CoA. Its pathway is lipid metabolism; fatty acid biosynthesis. Functionally, could be implicated in synthesis of very long chain fatty acids. May be required for normally rapid growth. The sequence is that of Putative fatty acid elongase 3 (elo-3) from Caenorhabditis elegans.